Consider the following 126-residue polypeptide: Probable glycine cleavage system H protein (126 aa).

A Lipoyl-binding domain is found at 24–106 (VVRVGITDFA…FGDGWLLEVE (83 aa)). Position 65 is an N6-lipoyllysine (K65).

The protein belongs to the GcvH family. As to quaternary structure, the glycine cleavage system is composed of four proteins: P, T, L and H. Requires (R)-lipoate as cofactor.

Its function is as follows. The glycine cleavage system catalyzes the degradation of glycine. The H protein shuttles the methylamine group of glycine from the P protein to the T protein. The chain is Probable glycine cleavage system H protein from Natronomonas pharaonis (strain ATCC 35678 / DSM 2160 / CIP 103997 / JCM 8858 / NBRC 14720 / NCIMB 2260 / Gabara) (Halobacterium pharaonis).